Reading from the N-terminus, the 409-residue chain is Phenoxybenzoate dioxygenase subunit alpha (409 aa).

The 105-residue stretch at 45-149 folds into the Rieske domain; that stretch reads WQPVALSADV…VEERYGLVFA (105 aa). The [2Fe-2S] cluster site is built by C85, H87, C104, and H107. 2 residues coordinate Fe cation: H210 and H215.

Belongs to the bacterial ring-hydroxylating dioxygenase alpha subunit family. This dioxygenase system consists of two proteins: the alpha subunit (PobA) and a subunit (PobB) that acts as a ferredoxin and a ferredoxin reductase. Requires [2Fe-2S] cluster as cofactor. It depends on Fe cation as a cofactor.

It functions in the pathway aromatic compound metabolism; carboxydiphenyl ether degradation. In terms of biological role, degrades exclusively diarylether compounds having carboxyl groups in the 3- or 4-position. Yields a hemiacetal that spontaneously hydrolyzes to phenol and protocatechuate. The polypeptide is Phenoxybenzoate dioxygenase subunit alpha (pobA) (Ectopseudomonas oleovorans (Pseudomonas oleovorans)).